The sequence spans 936 residues: DNA topoisomerase 1 (936 aa).

Residues 15 to 139 (RRLVIVESPT…VKRMVFHEIT (125 aa)) form the Toprim domain. The Mg(2+) site is built by Glu21 and Asp108. Residues 154–611 (DIALVDAQET…FYFGGEHGVE (458 aa)) form the Topo IA-type catalytic domain. The interval 188 to 193 (SAGRVQ) is interaction with DNA. Catalysis depends on Tyr339, which acts as the O-(5'-phospho-DNA)-tyrosine intermediate. Disordered regions lie at residues 661-688 (LERMVDDPDNPGEQKPQRANLKEDLTPD), 732-767 (VLPEPEDGGDDGTAGTPAKKGKKPTGPKPRTGSLFR), 841-884 (KRRG…ETNA), and 903-936 (LLADRRARGPVKKKAPAKKAAKKAPAKKAAAKKA). The span at 910-936 (RGPVKKKAPAKKAAKKAPAKKAAAKKA) shows a compositional bias: basic residues.

It belongs to the type IA topoisomerase family. In terms of assembly, monomer. Mg(2+) is required as a cofactor.

It carries out the reaction ATP-independent breakage of single-stranded DNA, followed by passage and rejoining.. Functionally, releases the supercoiling and torsional tension of DNA, which is introduced during the DNA replication and transcription, by transiently cleaving and rejoining one strand of the DNA duplex. Introduces a single-strand break via transesterification at a target site in duplex DNA. The scissile phosphodiester is attacked by the catalytic tyrosine of the enzyme, resulting in the formation of a DNA-(5'-phosphotyrosyl)-enzyme intermediate and the expulsion of a 3'-OH DNA strand. The free DNA strand then undergoes passage around the unbroken strand, thus removing DNA supercoils. Finally, in the religation step, the DNA 3'-OH attacks the covalent intermediate to expel the active-site tyrosine and restore the DNA phosphodiester backbone. In terms of biological role, relaxes negatively (but not positively) supercoiled DNA, concatanates and knots circular ssDNA at 52 but not 37 degrees Celsius. Preferentially nicks supercoiled DNA at C(G/T)CTT, cutting between the TT residues, binds ss and dsDNA with the recognition site. In Mycolicibacterium smegmatis (strain ATCC 700084 / mc(2)155) (Mycobacterium smegmatis), this protein is DNA topoisomerase 1.